The primary structure comprises 318 residues: Pyrimidine-specific ribonucleoside hydrolase RihA (318 aa).

H240 is a catalytic residue.

This sequence belongs to the IUNH family. RihA subfamily.

Hydrolyzes cytidine or uridine to ribose and cytosine or uracil, respectively. The polypeptide is Pyrimidine-specific ribonucleoside hydrolase RihA (Shewanella sp. (strain ANA-3)).